A 371-amino-acid polypeptide reads, in one-letter code: MPHQQMLILFGLLPVATNISTWWNFGSMLLTCSALQVMTGFSLSMHYTANINLAFCSIIHITRDVPHGWVMQNLHAIGASMFFICIYMYIARGLYYGSYLNKETWLSGTTLLIMLMATAFFGYVLPWGQMSFWAATVITNLLTAIPYLGTTMTTWLWGGFAINDPTLTRFFALHFILPFGIISVSSIHIMLLHEDGSGNPLGTNSDIDKIPFHPYHTYKDILMISIMIITLLLTVSFFPDIMNDPENFSKANPLVTPQHIKPEWYFLFAYGILRSIPNKLGGALALVMSIMILFTMPFTHTSPMRSLTFRPLMQFMFWTLVATFVIITWTATKPVEPPFTTISQVASIIYFTFFMSNPILGWLENKITKHN.

The next 4 membrane-spanning stretches (helical) occupy residues 25–45, 69–90, 105–125, and 170–190; these read FGSM…SLSM, WVMQ…YMYI, WLSG…GYVL, and FFAL…IHIM. Residue H75 participates in heme b binding. The heme b site is built by H174 and H188. H193 contacts a ubiquinone. Helical transmembrane passes span 218–238, 280–300, 312–332, and 339–358; these read YKDI…VSFF, LGGA…PFTH, LMQF…WTAT, and FTTI…MSNP.

The protein belongs to the cytochrome b family. As to quaternary structure, the cytochrome bc1 complex contains 3 respiratory subunits (MT-CYB, CYC1 and UQCRFS1), 2 core proteins (UQCRC1 and UQCRC2) and probably 6 low-molecular weight proteins. It depends on heme b as a cofactor.

It localises to the mitochondrion inner membrane. In terms of biological role, component of the ubiquinol-cytochrome c reductase complex (complex III or cytochrome b-c1 complex) that is part of the mitochondrial respiratory chain. The b-c1 complex mediates electron transfer from ubiquinol to cytochrome c. Contributes to the generation of a proton gradient across the mitochondrial membrane that is then used for ATP synthesis. The sequence is that of Cytochrome b (MT-CYB) from Candoia aspera (New Guinea boa).